The sequence spans 273 residues: Phosphate import ATP-binding protein PstB (273 aa).

Residues 17-259 (LSAENLSIFY…DKTNNIFQNP (243 aa)) enclose the ABC transporter domain. 49-56 (GPSGCGKS) is a binding site for ATP.

Belongs to the ABC transporter superfamily. Phosphate importer (TC 3.A.1.7) family. The complex is composed of two ATP-binding proteins (PstB), two transmembrane proteins (PstC and PstA) and a solute-binding protein (PstS).

The protein localises to the cell inner membrane. It catalyses the reaction phosphate(out) + ATP + H2O = ADP + 2 phosphate(in) + H(+). In terms of biological role, part of the ABC transporter complex PstSACB involved in phosphate import. Responsible for energy coupling to the transport system. The protein is Phosphate import ATP-binding protein PstB of Trichodesmium erythraeum (strain IMS101).